Consider the following 886-residue polypeptide: Microsomal triglyceride transfer protein (886 aa).

Positions 1–24 (MLRLAGLLLCVTSFLSTSSLGANA) are cleaved as a signal peptide. Residues 28–662 (LDNDRLYRYS…QSNNALLHGL (635 aa)) form the Vitellogenin domain. Intrachain disulfides connect cysteine 174-cysteine 194 and cysteine 440-cysteine 445.

Heterodimer; heterodimerizes with the protein disulfide isomerase. Interacts with apolipoprotein B.

Its subcellular location is the endoplasmic reticulum. Its function is as follows. Catalyzes the transport of triglyceride, cholesteryl ester, and phospholipid between phospholipid surfaces. Required for the secretion of plasma lipoproteins that contain apolipoprotein B. The polypeptide is Microsomal triglyceride transfer protein (Megalobrama amblycephala (Chinese blunt snout bream)).